We begin with the raw amino-acid sequence, 377 residues long: MLISARRLRRCQFFQLLTSCFVLSLMALLVQEDNSLINHVKSYSYRYLINSYDFVNDSLSVPRDRPDGAPSYRYLINNRDKCQNEDVLLLLFVKTSPENRRRRNAIRKTWGNEDYIRSQYAANIKVVFALGIEADPVKSHQTQKDLVIENKRFNDLIQQDFKDTFHNLTLKLLLQFGWVNSYCPSAKFIMSADDDIFVHTPNLVSYLKSLPIETQDFWIGRVHRGSPPIRSKTSKYYVPYEMYPWSSYPDYTAGAAYVVSKDVAAKVYEASQTLNTSLYIDDVFMGICANKMGVVPQYHVYFAGEGKAPYHPCIYNKMITSHGHLDDLDYLWRQATDPNVKSLSAGVLGGAYCKLVNIMLLCKLSYVDTYPCSAAWS.

Residues 1-12 (MLISARRLRRCQ) are Cytoplasmic-facing. A helical; Signal-anchor for type II membrane protein transmembrane segment spans residues 13 to 30 (FFQLLTSCFVLSLMALLV). Over 31–377 (QEDNSLINHV…DTYPCSAAWS (347 aa)) the chain is Lumenal. N56, N167, and N275 each carry an N-linked (GlcNAc...) asparagine glycan.

This sequence belongs to the glycosyltransferase 31 family.

The protein localises to the golgi apparatus membrane. It carries out the reaction a beta-D-Gal-(1-&gt;4)-beta-D-Glc-(1&lt;-&gt;1)-Cer(d18:1(4E)) + UDP-N-acetyl-alpha-D-glucosamine = a beta-D-GlcNAc-(1-&gt;3)-beta-D-Gal-(1-&gt;4)-beta-D-Glc-(1&lt;-&gt;1)-Cer(d18:1(4E)) + UDP + H(+). The catalysed reaction is a neolactoside nLc4Cer(d18:1(4E)) + UDP-N-acetyl-alpha-D-glucosamine = a neolactoside IV(3)-beta-GlcNAc-nLc4Cer(d18:1(4E)) + UDP + H(+). Its pathway is protein modification; protein glycosylation. Beta-1,3-N-acetylglucosaminyltransferase that plays a key role in the synthesis of lacto- or neolacto-series carbohydrate chains on glycolipids. The sequence is that of Lactosylceramide 1,3-N-acetyl-beta-D-glucosaminyltransferase (b3gnt5) from Xenopus tropicalis (Western clawed frog).